The sequence spans 488 residues: 3-octaprenyl-4-hydroxybenzoate carboxy-lyase (488 aa).

Asn-172 contributes to the Mn(2+) binding site. Prenylated FMN is bound by residues 175–177 (IYR), 189–191 (RWL), and 194–195 (RG). Residue Glu-238 coordinates Mn(2+). Residue Asp-287 is the Proton donor of the active site.

The protein belongs to the UbiD family. As to quaternary structure, homohexamer. It depends on prenylated FMN as a cofactor. Requires Mn(2+) as cofactor.

The protein localises to the cell membrane. It carries out the reaction a 4-hydroxy-3-(all-trans-polyprenyl)benzoate + H(+) = a 2-(all-trans-polyprenyl)phenol + CO2. It participates in cofactor biosynthesis; ubiquinone biosynthesis. Functionally, catalyzes the decarboxylation of 3-octaprenyl-4-hydroxy benzoate to 2-octaprenylphenol, an intermediate step in ubiquinone biosynthesis. This Alteromonas mediterranea (strain DSM 17117 / CIP 110805 / LMG 28347 / Deep ecotype) protein is 3-octaprenyl-4-hydroxybenzoate carboxy-lyase.